A 180-amino-acid polypeptide reads, in one-letter code: Acireductone dioxygenase (180 aa).

Residues His-96, His-98, Glu-102, and His-140 each contribute to the Fe(2+) site. Ni(2+) contacts are provided by His-96, His-98, Glu-102, and His-140.

Belongs to the acireductone dioxygenase (ARD) family. In terms of assembly, monomer. The cofactor is Fe(2+). It depends on Ni(2+) as a cofactor.

It carries out the reaction 1,2-dihydroxy-5-(methylsulfanyl)pent-1-en-3-one + O2 = 3-(methylsulfanyl)propanoate + CO + formate + 2 H(+). The enzyme catalyses 1,2-dihydroxy-5-(methylsulfanyl)pent-1-en-3-one + O2 = 4-methylsulfanyl-2-oxobutanoate + formate + 2 H(+). It participates in amino-acid biosynthesis; L-methionine biosynthesis via salvage pathway; L-methionine from S-methyl-5-thio-alpha-D-ribose 1-phosphate: step 5/6. Functionally, catalyzes 2 different reactions between oxygen and the acireductone 1,2-dihydroxy-3-keto-5-methylthiopentene (DHK-MTPene) depending upon the metal bound in the active site. Fe-containing acireductone dioxygenase (Fe-ARD) produces formate and 2-keto-4-methylthiobutyrate (KMTB), the alpha-ketoacid precursor of methionine in the methionine recycle pathway. Ni-containing acireductone dioxygenase (Ni-ARD) produces methylthiopropionate, carbon monoxide and formate, and does not lie on the methionine recycle pathway. This Synechococcus sp. (strain WH7803) protein is Acireductone dioxygenase.